Reading from the N-terminus, the 50-residue chain is MPREGLTLRCETCKMENYITKKNKKLHPDKMEVTKYCPKCNQHTNHKEKK.

The protein belongs to the bacterial ribosomal protein bL33 family.

The chain is Large ribosomal subunit protein bL33B from Metamycoplasma arthritidis (strain 158L3-1) (Mycoplasma arthritidis).